The primary structure comprises 874 residues: Alanine--tRNA ligase (874 aa).

Zn(2+) is bound by residues His563, His567, Cys665, and His669.

It belongs to the class-II aminoacyl-tRNA synthetase family. Zn(2+) is required as a cofactor.

Its subcellular location is the cytoplasm. It catalyses the reaction tRNA(Ala) + L-alanine + ATP = L-alanyl-tRNA(Ala) + AMP + diphosphate. Its function is as follows. Catalyzes the attachment of alanine to tRNA(Ala) in a two-step reaction: alanine is first activated by ATP to form Ala-AMP and then transferred to the acceptor end of tRNA(Ala). Also edits incorrectly charged Ser-tRNA(Ala) and Gly-tRNA(Ala) via its editing domain. The protein is Alanine--tRNA ligase of Actinobacillus pleuropneumoniae serotype 5b (strain L20).